Consider the following 474-residue polypeptide: F420-non-reducing hydrogenase vhc subunit A (474 aa).

Ni(2+) contacts are provided by cysteine 61, cysteine 64, cysteine 445, and cysteine 448.

This sequence belongs to the [NiFe]/[NiFeSe] hydrogenase large subunit family. The F420-non-reducing hydrogenase vhc is composed of three subunits; VhcA, VhcD and VhcG. Ni(2+) is required as a cofactor.

The sequence is that of F420-non-reducing hydrogenase vhc subunit A (vhcA) from Methanococcus voltae.